An 85-amino-acid polypeptide reads, in one-letter code: Large ribosomal subunit protein bL27 (85 aa).

A compositionally biased stretch (polar residues) spans 1 to 13 (MAKTKSGGSTSNG). The segment at 1–26 (MAKTKSGGSTSNGRDSKGRRLGQKLG) is disordered.

This sequence belongs to the bacterial ribosomal protein bL27 family.

The chain is Large ribosomal subunit protein bL27 from Mycoplasma mobile (strain ATCC 43663 / 163K / NCTC 11711) (Mesomycoplasma mobile).